A 191-amino-acid chain; its full sequence is Protein GrpE (191 aa).

Residues 1–10 are compositionally biased toward basic and acidic residues; the sequence is MNHEEQKVEA. Residues 1–28 are disordered; the sequence is MNHEEQKVEAMEQVEAQPVEPTDVDSEV.

The protein belongs to the GrpE family. In terms of assembly, homodimer.

It localises to the cytoplasm. Its function is as follows. Participates actively in the response to hyperosmotic and heat shock by preventing the aggregation of stress-denatured proteins, in association with DnaK and GrpE. It is the nucleotide exchange factor for DnaK and may function as a thermosensor. Unfolded proteins bind initially to DnaJ; upon interaction with the DnaJ-bound protein, DnaK hydrolyzes its bound ATP, resulting in the formation of a stable complex. GrpE releases ADP from DnaK; ATP binding to DnaK triggers the release of the substrate protein, thus completing the reaction cycle. Several rounds of ATP-dependent interactions between DnaJ, DnaK and GrpE are required for fully efficient folding. This chain is Protein GrpE, found in Aeromonas hydrophila subsp. hydrophila (strain ATCC 7966 / DSM 30187 / BCRC 13018 / CCUG 14551 / JCM 1027 / KCTC 2358 / NCIMB 9240 / NCTC 8049).